A 469-amino-acid polypeptide reads, in one-letter code: Cholesterol 7-desaturase nvd (469 aa).

The signal sequence occupies residues 1-25 (MASFCASKFLPGLLMLGLGLAVALA). The helical transmembrane segment at 58–78 (NFVASQTLLTLTIFGVASFIL) threads the bilayer. Positions 132 to 238 (IPLVASQDLV…VIEQNGFVLV (107 aa)) constitute a Rieske domain. The [2Fe-2S] cluster site is built by cysteine 172, histidine 174, cysteine 192, and histidine 195.

This sequence belongs to the cholesterol 7-desaturase family. The cofactor is [2Fe-2S] cluster.

It is found in the membrane. It carries out the reaction cholesterol + NADPH + O2 + H(+) = 7-dehydrocholesterol + NADP(+) + 2 H2O. It catalyses the reaction cholesterol + NADH + O2 + H(+) = 7-dehydrocholesterol + NAD(+) + 2 H2O. It participates in steroid hormone biosynthesis; dafachronic acid biosynthesis. Functionally, catalyzes the production of 7-dehydrocholesterol (7-DHC or cholesta-5,7-dien-3beta-ol) by inserting a double bond (desaturating) at the C7-C8 single bond of cholesterol. Essential regulator of steroid biosynthesis as this reaction is the first step in the synthesis of the steroid hormone Delta(7)-dafachronic acid. The protein is Cholesterol 7-desaturase nvd of Hemicentrotus pulcherrimus (Sea urchin).